The chain runs to 767 residues: Protein ROLLING AND ERECT LEAF 2 (767 aa).

3 disordered regions span residues M1–R20, P78–F187, and R201–V309. Composition is skewed to pro residues over residues A81–S90 and A110–V126. Over residues S145–S155 the composition is skewed to low complexity. The segment covering R201–R210 has biased composition (basic and acidic residues). The segment covering E221–E232 has biased composition (acidic residues). A compositionally biased stretch (basic and acidic residues) spans T255 to N264.

Highly expressed in young leaves and panicles. Expressed at low levels in roots.

The protein localises to the cell membrane. Involved in the regulation of leaf shape formation. May function by coordinating the expression of genes associated with leaf and bulliform cell development. The protein is Protein ROLLING AND ERECT LEAF 2 of Oryza sativa subsp. japonica (Rice).